We begin with the raw amino-acid sequence, 201 residues long: Small ribosomal subunit protein uS4 (201 aa).

Residues 26 to 48 are disordered; that stretch reads LSKKNYPPGQHGNSRKRKTSEYG. Residues 92-155 enclose the S4 RNA-binding domain; sequence GRLDNVVFRL…KSLEVIANSL (64 aa).

It belongs to the universal ribosomal protein uS4 family. As to quaternary structure, part of the 30S ribosomal subunit. Contacts protein S5. The interaction surface between S4 and S5 is involved in control of translational fidelity.

Its function is as follows. One of the primary rRNA binding proteins, it binds directly to 16S rRNA where it nucleates assembly of the body of the 30S subunit. In terms of biological role, with S5 and S12 plays an important role in translational accuracy. In Bacteroides thetaiotaomicron (strain ATCC 29148 / DSM 2079 / JCM 5827 / CCUG 10774 / NCTC 10582 / VPI-5482 / E50), this protein is Small ribosomal subunit protein uS4.